The following is a 316-amino-acid chain: MANLKEIRDRIVSVKNTRKITEAMRLVAAAKVRRAQDQVLKSRPFADKLARVLENIQSRVQFEAVDSPLLSKREVKSISLVCITADRGLCGGYNTNIIKKVEIRYAELVKQGFQPNLILVGKKAIGFFQNRKDRYVIKSTFKELEQVPTVKDSEGITNEILAEFLSENSDRVEIIYTKFITLVSCAPVVQTLLPLDPQGIAEENDEIFRLTTKDSKLLVEKSNIEKSDSEKLPSDIVFEQSPDQLLDSLLPLYLQNQVLRALQESAASELACRMTAMNNASDNAKELASTLNLTYNKARQAAITQEILEVVGGSVV.

It belongs to the ATPase gamma chain family. As to quaternary structure, F-type ATPases have 2 components, CF(1) - the catalytic core - and CF(0) - the membrane proton channel. CF(1) has five subunits: alpha(3), beta(3), gamma(1), delta(1), epsilon(1). CF(0) has three main subunits: a, b and c.

Its subcellular location is the cellular thylakoid membrane. Its function is as follows. Produces ATP from ADP in the presence of a proton gradient across the membrane. The gamma chain is believed to be important in regulating ATPase activity and the flow of protons through the CF(0) complex. This chain is ATP synthase gamma chain, found in Prochlorococcus marinus (strain MIT 9215).